The chain runs to 508 residues: Photosystem II CP47 reaction center protein (508 aa).

The next 6 helical transmembrane spans lie at 21–36 (AVHI…WAGS), 101–115 (IVFS…IWHW), 140–156 (GIHL…FGAF), 203–218 (IAAG…FHLS), 237–252 (VLSS…AFVV), and 457–472 (TFAL…HGAR).

The protein belongs to the PsbB/PsbC family. PsbB subfamily. In terms of assembly, PSII is composed of 1 copy each of membrane proteins PsbA, PsbB, PsbC, PsbD, PsbE, PsbF, PsbH, PsbI, PsbJ, PsbK, PsbL, PsbM, PsbT, PsbX, PsbY, PsbZ, Psb30/Ycf12, at least 3 peripheral proteins of the oxygen-evolving complex and a large number of cofactors. It forms dimeric complexes. The cofactor is Binds multiple chlorophylls. PSII binds additional chlorophylls, carotenoids and specific lipids..

The protein localises to the plastid. It is found in the chloroplast thylakoid membrane. Functionally, one of the components of the core complex of photosystem II (PSII). It binds chlorophyll and helps catalyze the primary light-induced photochemical processes of PSII. PSII is a light-driven water:plastoquinone oxidoreductase, using light energy to abstract electrons from H(2)O, generating O(2) and a proton gradient subsequently used for ATP formation. The protein is Photosystem II CP47 reaction center protein of Secale cereale (Rye).